Here is a 296-residue protein sequence, read N- to C-terminus: MDYFNIKQNYYTGNFVQCLQEIEKFSKVTDNTLLFYKAKTLLALGQYQSQDPTSKLGKVLDLYVQFLDTKNIEELENLLKDKQNSPYELYLLATAQAILGDLDKSLETCVEGIDNDEAEGTTELLLLAIEVALLNNNVSTASTIFDNYTNAIEDTVSGDNEMILNLAESYIKFATNKETATSNFYYYEELSQTFPTWKTQLGLLNLHLQQRNIAEAQGIVELLLSDYYSVEQKENAVLYKPTFLANQITLALMQGLDTEDLTNQLVKLDHEHAFIKHHQEIDAKFDELVRKYDTSN.

Belongs to the COPE family. In terms of assembly, oligomeric complex that consists of at least the alpha, beta, beta', gamma, delta, epsilon and zeta subunits. Interacts with the ESCRT-0 subunit VPS27.

It is found in the cytoplasm. It localises to the golgi apparatus membrane. The protein localises to the cytoplasmic vesicle. The protein resides in the COPI-coated vesicle membrane. The coatomer is a cytosolic protein complex that binds to dilysine motifs and reversibly associates with Golgi non-clathrin-coated vesicles, which further mediate biosynthetic protein transport from the ER, via the Golgi up to the trans Golgi network. The coatomer complex is required for budding from Golgi membranes, and is essential for the retrograde Golgi-to-ER transport of dilysine-tagged proteins. This Saccharomyces cerevisiae (strain ATCC 204508 / S288c) (Baker's yeast) protein is Coatomer subunit epsilon (SEC28).